A 162-amino-acid polypeptide reads, in one-letter code: D-aminoacyl-tRNA deacylase (162 aa).

The Gly-cisPro motif, important for rejection of L-amino acids signature appears at 145–146 (GP).

The protein belongs to the DTD family. Homodimer.

The protein localises to the cytoplasm. It carries out the reaction glycyl-tRNA(Ala) + H2O = tRNA(Ala) + glycine + H(+). The enzyme catalyses a D-aminoacyl-tRNA + H2O = a tRNA + a D-alpha-amino acid + H(+). Its function is as follows. An aminoacyl-tRNA editing enzyme that deacylates mischarged D-aminoacyl-tRNAs. Also deacylates mischarged glycyl-tRNA(Ala), protecting cells against glycine mischarging by AlaRS. Acts via tRNA-based rather than protein-based catalysis; rejects L-amino acids rather than detecting D-amino acids in the active site. By recycling D-aminoacyl-tRNA to D-amino acids and free tRNA molecules, this enzyme counteracts the toxicity associated with the formation of D-aminoacyl-tRNA entities in vivo and helps enforce protein L-homochirality. The polypeptide is D-aminoacyl-tRNA deacylase (Bifidobacterium longum (strain NCC 2705)).